The sequence spans 237 residues: tRNA (guanine-N(1)-)-methyltransferase (237 aa).

S-adenosyl-L-methionine is bound by residues G113 and 133–138 (MGDYIL).

The protein belongs to the RNA methyltransferase TrmD family. As to quaternary structure, homodimer.

The protein resides in the cytoplasm. The enzyme catalyses guanosine(37) in tRNA + S-adenosyl-L-methionine = N(1)-methylguanosine(37) in tRNA + S-adenosyl-L-homocysteine + H(+). Functionally, specifically methylates guanosine-37 in various tRNAs. In Wolinella succinogenes (strain ATCC 29543 / DSM 1740 / CCUG 13145 / JCM 31913 / LMG 7466 / NCTC 11488 / FDC 602W) (Vibrio succinogenes), this protein is tRNA (guanine-N(1)-)-methyltransferase.